Reading from the N-terminus, the 348-residue chain is NFSTPLSEYEEVSYESAGYTVLQILPLVVLGVTFVLGVLGNGLVIWVAGFRMTRTVTTICYLNLALADFSFTATLPFLIVSMAMGEKWPFGWFLCKLIHIVVDINLFGSVFLIGFIALDRCICVLHPVWAQNHRTVSLAMKVIVGPWILALVLTLPVFLFLTTVTIPNGDTYCTFNFASWGGTPEKRLKVAITMLTARGIIRFVIGFSMPMSIVATCYGLIAAKIHKKGMIKSSRPLRVLTAVVASFFICWFPFQLVALLSTVWLKEILVDGKYKIINILVNPTSSLAFFNSCLNPMLYVFVGQDFRERLIHSLPTSLERALSEDSAPTNDTAASCASPPAETELQAM.

The N-linked (GlcNAc...) asparagine glycan is linked to Asn-1. Residues 1–24 are Extracellular-facing; it reads NFSTPLSEYEEVSYESAGYTVLQI. A helical transmembrane segment spans residues 25–47; the sequence is LPLVVLGVTFVLGVLGNGLVIWV. At 48-58 the chain is on the cytoplasmic side; sequence AGFRMTRTVTT. The chain crosses the membrane as a helical span at residues 59-80; it reads ICYLNLALADFSFTATLPFLIV. The Extracellular segment spans residues 81-97; it reads SMAMGEKWPFGWFLCKL. Cysteines 95 and 173 form a disulfide. A helical membrane pass occupies residues 98-118; that stretch reads IHIVVDINLFGSVFLIGFIAL. Topologically, residues 119 to 137 are cytoplasmic; it reads DRCICVLHPVWAQNHRTVS. Residues 138-159 traverse the membrane as a helical segment; it reads LAMKVIVGPWILALVLTLPVFL. Residues 160 to 202 lie on the Extracellular side of the membrane; sequence FLTTVTIPNGDTYCTFNFASWGGTPEKRLKVAITMLTARGIIR. A helical transmembrane segment spans residues 203 to 223; that stretch reads FVIGFSMPMSIVATCYGLIAA. At 224–239 the chain is on the cytoplasmic side; that stretch reads KIHKKGMIKSSRPLRV. The helical transmembrane segment at 240–263 threads the bilayer; that stretch reads LTAVVASFFICWFPFQLVALLSTV. Topologically, residues 264–283 are extracellular; it reads WLKEILVDGKYKIINILVNP. A helical transmembrane segment spans residues 284-303; that stretch reads TSSLAFFNSCLNPMLYVFVG. Residues 304-348 are Cytoplasmic-facing; it reads QDFRERLIHSLPTSLERALSEDSAPTNDTAASCASPPAETELQAM. A disordered region spans residues 322–348; sequence LSEDSAPTNDTAASCASPPAETELQAM. A compositionally biased stretch (polar residues) spans 326-335; the sequence is SAPTNDTAAS.

This sequence belongs to the G-protein coupled receptor 1 family. As to quaternary structure, interacts with APP; the interaction takes place at the cell surface and the complex is then rapidly internalized.

The protein resides in the cell membrane. Functionally, low affinity receptor for N-formyl-methionyl peptides, which are powerful neutrophil chemotactic factors. Binding of FMLP to the receptor causes activation of neutrophils. This response is mediated via a G-protein that activates a phosphatidylinositol-calcium second messenger system. Receptor for the chemokine-like protein FAM19A5, mediating FAM19A5-stimulated macrophage chemotaxis and the inhibitory effect on TNFSF11/RANKL-induced osteoclast differentiation. This Macaca mulatta (Rhesus macaque) protein is N-formyl peptide receptor 2 (FPR2).